Consider the following 436-residue polypeptide: Sulfopropanediol 3-dehydrogenase (436 aa).

3 residues coordinate NAD(+): Y118, Q180, and N203. Zn(2+) is bound by residues Q248 and H251. Residues E318 and H319 each act as proton acceptor in the active site. Positions 352 and 411 each coordinate Zn(2+).

It belongs to the histidinol dehydrogenase family. HpsN subfamily. Requires Zn(2+) as cofactor.

It carries out the reaction (2R)-3-sulfopropanediol + 2 NAD(+) + H2O = (2R)-3-sulfolactate + 2 NADH + 3 H(+). Its function is as follows. Catalyzes the NAD-dependent oxidation of (R)-2,3-dihydroxypropane-1-sulfonate to (R)-3-sulfolactate. In Cupriavidus pinatubonensis (strain JMP 134 / LMG 1197) (Cupriavidus necator (strain JMP 134)), this protein is Sulfopropanediol 3-dehydrogenase.